The following is an 873-amino-acid chain: Protein translocase subunit SecA (873 aa).

Residues Gln-88, 106–110 (GEGKT), and Asp-501 each bind ATP. Zn(2+) contacts are provided by Cys-856, Cys-858, Cys-867, and His-868.

Belongs to the SecA family. Monomer and homodimer. Part of the essential Sec protein translocation apparatus which comprises SecA, SecYEG and auxiliary proteins SecDF-YajC and YidC. Zn(2+) is required as a cofactor.

It is found in the cell inner membrane. Its subcellular location is the cytoplasm. The catalysed reaction is ATP + H2O + cellular proteinSide 1 = ADP + phosphate + cellular proteinSide 2.. Part of the Sec protein translocase complex. Interacts with the SecYEG preprotein conducting channel. Has a central role in coupling the hydrolysis of ATP to the transfer of proteins into and across the cell membrane, serving both as a receptor for the preprotein-SecB complex and as an ATP-driven molecular motor driving the stepwise translocation of polypeptide chains across the membrane. The protein is Protein translocase subunit SecA of Anaplasma phagocytophilum (strain HZ).